Reading from the N-terminus, the 154-residue chain is Homeobox protein engrailed (154 aa).

The homeobox DNA-binding region spans 37–96; the sequence is EKRPRTAFSASQLQRLKQEFQQSNYLTEQRRRSLAKELTLSESQIKIWFQNKRAKIKKAS. The disordered stretch occupies residues 127-154; the sequence is KLLNGQNTSGDCSRSDYTSDSDGDSLTH. The span at 129 to 144 shows a compositional bias: polar residues; the sequence is LNGQNTSGDCSRSDYT. A compositionally biased stretch (acidic residues) spans 145-154; the sequence is SDSDGDSLTH.

It belongs to the engrailed homeobox family.

It localises to the nucleus. The protein is Homeobox protein engrailed (EN) of Tripneustes gratilla (Hawaian sea urchin).